The following is a 653-amino-acid chain: ATP-dependent rRNA helicase SPB4 (653 aa).

A Q motif motif is present at residues 17–45 (WQALTPPLSEWILDAVAAMGFTRMTPVQA). The 210-residue stretch at 48-257 (IPLFMGHKDV…RVGLRNPVKI (210 aa)) folds into the Helicase ATP-binding domain. Residue 61 to 68 (AVTGSGKT) coordinates ATP. Positions 205-208 (DEAD) match the DEAD box motif. A Helicase C-terminal domain is found at 291 to 444 (AIRQILNSID…SPPVALSDTL (154 aa)). Residues 534–653 (KQREKHRQES…DGESEFEGFD (120 aa)) are disordered. Polar residues predominate over residues 558–569 (PSSSSNNDTAPW). Positions 571–627 (KTLEKKSDKEKRRERKRAKKEREHWEKMTEEEKTKSRETHQMLEELRKKNRQELNAK) form a coiled coil. Basic and acidic residues-rich tracts occupy residues 572 to 581 (TLEKKSDKEK) and 590 to 626 (KERE…ELNA). The segment covering 627 to 636 (KSHTSSSVLS) has biased composition (polar residues). The span at 641-653 (AELDGESEFEGFD) shows a compositional bias: acidic residues.

This sequence belongs to the DEAD box helicase family. DDX55/SPB4 subfamily. Component of pre-60S ribosomal complexes.

The protein localises to the nucleus. Its subcellular location is the nucleolus. The enzyme catalyses ATP + H2O = ADP + phosphate + H(+). ATP-binding RNA helicase involved in the biogenesis of 60S ribosomal subunits. Binds 90S pre-ribosomal particles and dissociates from pre-60S ribosomal particles after processing of 27SB pre-rRNA. Required for the normal formation of 18S rRNA through the processing of pre-rRNAs at sites A0, A1 and A2, and the normal formation of 25S and 5.8S rRNAs through the processing of pre-rRNAs at sites C1 and C2. This Coccidioides immitis (strain RS) (Valley fever fungus) protein is ATP-dependent rRNA helicase SPB4.